The following is a 146-amino-acid chain: Shadow of prion protein (146 aa).

Positions 1-24 (MRGTSAVCWSLLLLIALLSQNVTA) are cleaved as a signal peptide. The N-linked (GlcNAc...) asparagine glycan is linked to Asn94. A lipid anchor (GPI-anchor amidated serine) is attached at Ser108. A propeptide spans 109–146 (GTCPLSSHLSFRLIISIGAILTCSSSSIYVSTKINLGK) (removed in mature form).

Belongs to the SPRN family.

The protein resides in the cell membrane. Its function is as follows. Prion-like protein that has PrP(C)-like neuroprotective activity. The polypeptide is Shadow of prion protein (sprn) (Xenopus tropicalis (Western clawed frog)).